Reading from the N-terminus, the 636-residue chain is Nitrous-oxide reductase (636 aa).

Residues 1 to 49 (MSDDTKSPHEETHGLNRRGFLGASALTGAAALVGASALGSAVVGREARA) constitute a signal peptide (tat-type signal). Residues His-127, His-128, and His-176 each contribute to the Cu cation site. Residues Tyr-254, Glu-257, Met-265, and Asp-271 each coordinate Ca(2+). A compositionally biased stretch (basic and acidic residues) spans 302–312 (DGRRKDGKDSP). Residues 302–322 (DGRRKDGKDSPVTRYIPVPKN) form a disordered region. A Ca(2+)-binding site is contributed by Asn-322. Residues His-324, His-380, and His-431 each coordinate Cu cation. Ca(2+) contacts are provided by Lys-452 and Glu-467. Positions 492, 581, 616, 618, 620, 624, and 627 each coordinate Cu cation. Positions 540–636 (NKVRVYMVSM…MCGRMLVEKA (97 aa)) are COX2-like.

The protein belongs to the NosZ family. In the C-terminal section; belongs to the cytochrome c oxidase subunit 2 family. In terms of assembly, homodimer. It depends on Ca(2+) as a cofactor. Cu cation is required as a cofactor. Post-translationally, predicted to be exported by the Tat system. The position of the signal peptide cleavage has not been experimentally proven.

It is found in the periplasm. It catalyses the reaction N2 + 2 Fe(III)-[cytochrome c] + H2O = nitrous oxide + 2 Fe(II)-[cytochrome c] + 2 H(+). Its pathway is nitrogen metabolism; nitrate reduction (denitrification); dinitrogen from nitrate: step 4/4. Its function is as follows. Nitrous-oxide reductase is part of a bacterial respiratory system which is activated under anaerobic conditions in the presence of nitrate or nitrous oxide. The polypeptide is Nitrous-oxide reductase (nosZ) (Pseudomonas aeruginosa (strain ATCC 15692 / DSM 22644 / CIP 104116 / JCM 14847 / LMG 12228 / 1C / PRS 101 / PAO1)).